Consider the following 210-residue polypeptide: MPNARVFKILAAAKLNNIALEIPAYQHGVTNKSAEFLLKFPAGKVPAFEGPDGFCLVESDAIAQYVAQSGPQASQLLGQDAMSSAKIRQWISFFAEEIYPTVLDLVMWRVGLGAFDETTETKALTQLVYGLSVLEKHLGTGALLVGDKLTLADLTGASTLLWAFMHIVDEPMRQQYPNVVAWYLKVVQNEEVEEVFGKPNFIEKRRLGAK.

The region spanning 1–74 (MPNARVFKIL…YVAQSGPQAS (74 aa)) is the GST N-terminal domain. In terms of domain architecture, GST C-terminal spans 80 to 206 (DAMSSAKIRQ…GKPNFIEKRR (127 aa)).

The protein belongs to the GST superfamily.

Its function is as follows. Glutathione S-transferase-like protein; part of the gene cluster that mediates the biosynthesis of the mycotoxin fusarin C. Within the cluster, FUS1, FUS2, FUS8 and FUS9 are sufficient for fusarin production. The other FUS cluster members are not essential for fusarin C biosynthesis. The sequence is that of Glutathione S-transferase-like protein FUS3 from Gibberella fujikuroi (strain CBS 195.34 / IMI 58289 / NRRL A-6831) (Bakanae and foot rot disease fungus).